The following is a 514-amino-acid chain: Intracellular exo-alpha-L-arabinofuranosidase (514 aa).

The alpha-L-arabinofuranose site is built by glutamate 47 and asparagine 194. Glutamate 195 acts as the Proton donor/acceptor in catalysis. Alpha-L-arabinofuranose-binding residues include tyrosine 261, glutamate 317, and glutamine 366. The active-site Nucleophile is glutamate 317.

Belongs to the glycosyl hydrolase 51 family. In terms of assembly, homohexamer; trimer of dimers.

The protein localises to the cytoplasm. The catalysed reaction is Hydrolysis of terminal non-reducing alpha-L-arabinofuranoside residues in alpha-L-arabinosides.. It functions in the pathway glycan metabolism; L-arabinan degradation. In terms of biological role, involved in the degradation of arabinan and is a key enzyme in the complete degradation of the plant cell wall. Catalyzes the cleavage of terminal alpha-L-arabinofuranosyl residues in different hemicellulosic homopolysaccharides (branched and debranched arabinans) and heteropolysaccharides (arabinoxylans). The chain is Intracellular exo-alpha-L-arabinofuranosidase (asdII) from Bacteroides ovatus.